We begin with the raw amino-acid sequence, 81 residues long: uncharacterized protein (81 aa).

A mitochondrion-targeting transit peptide spans 1-20 (MYSRVLSVAAIVTMALAVQA). The segment at 27 to 53 (YGNTTNSTGTTNGTNGTNTTTSSTATQ) is disordered. Over residues 28–53 (GNTTNSTGTTNGTNGTNTTTSSTATQ) the composition is skewed to low complexity. A helical membrane pass occupies residues 59–79 (ITNFSSGAFVIAMIAVACSVM).

It localises to the mitochondrion membrane. This is an uncharacterized protein from Schizosaccharomyces pombe (strain 972 / ATCC 24843) (Fission yeast).